The following is a 210-amino-acid chain: Non-structural protein 5 (210 aa).

Position 86 (D86) interacts with Mg(2+). The segment at 119–141 is disordered; that stretch reads INFSRSKSKTGRSDFTESKSETS. The segment covering 129-138 has biased composition (basic and acidic residues); the sequence is GRSDFTESKS.

It belongs to the rotavirus NSP5 family. In terms of assembly, homodimer. Interacts with VP1. Interacts with VP2. Interacts with NSP2 and NSP6. Mg(2+) is required as a cofactor. Post-translationally, O-glycosylated.

It localises to the host cytoplasm. In terms of biological role, plays an essential role in the viral genome replication. Participates, together with NSP2, in the formation of viral factories (viroplasms) which are large inclusions in the host cytoplasm where replication intermediates are assembled and viral RNA replication takes place. Orchestrates the recruitment of viroplasmic proteins such as capsid proteins to these factories. This chain is Non-structural protein 5, found in Rotavirus C (strain RVC/Pig/United States/Cowden/1980) (RV-C).